A 401-amino-acid chain; its full sequence is Argininosuccinate synthase (401 aa).

ATP is bound by residues 9–17 and A36; that span reads AYSGGLDTS. The L-citrulline site is built by Y87 and S92. G117 contributes to the ATP binding site. Residues T119, N123, and D124 each contribute to the L-aspartate site. N123 provides a ligand contact to L-citrulline. Residues R127, S176, S185, E261, and Y273 each coordinate L-citrulline.

It belongs to the argininosuccinate synthase family. Type 1 subfamily. In terms of assembly, homotetramer.

It is found in the cytoplasm. The catalysed reaction is L-citrulline + L-aspartate + ATP = 2-(N(omega)-L-arginino)succinate + AMP + diphosphate + H(+). Its pathway is amino-acid biosynthesis; L-arginine biosynthesis; L-arginine from L-ornithine and carbamoyl phosphate: step 2/3. This is Argininosuccinate synthase from Syntrophobacter fumaroxidans (strain DSM 10017 / MPOB).